The following is an 878-amino-acid chain: Probable glucan endo-1,3-beta-glucosidase ARB_02077 (878 aa).

The first 27 residues, 1–27 (MARGLVSSLLLGQLLLVLVGLFSPAGA), serve as a signal peptide directing secretion. N-linked (GlcNAc...) asparagine glycosylation is found at asparagine 228, asparagine 257, asparagine 290, and asparagine 297. The segment at 373 to 472 (AGSGSKAKRL…TACPSAPVTK (100 aa)) is disordered. Pro residues predominate over residues 400–416 (APAPQPPAQSTAPPYPI). The span at 433–452 (VPTRVPTGGVPSGTTGTAPS) shows a compositional bias: low complexity. Residues asparagine 505, asparagine 659, asparagine 795, and asparagine 862 are each glycosylated (N-linked (GlcNAc...) asparagine).

The protein belongs to the glycosyl hydrolase 55 family.

The protein localises to the secreted. The catalysed reaction is Hydrolysis of (1-&gt;3)-beta-D-glucosidic linkages in (1-&gt;3)-beta-D-glucans.. Probable glucan endo-1,3-beta-glucosidase involved in the hydrolysis of fungal cell wall. Classified as a small-oligosaccharide-producing type based its the end products: glucose, laminaribiose or laminaritetraose. The chain is Probable glucan endo-1,3-beta-glucosidase ARB_02077 from Arthroderma benhamiae (strain ATCC MYA-4681 / CBS 112371) (Trichophyton mentagrophytes).